The sequence spans 353 residues: Ribosomal RNA small subunit methyltransferase (353 aa).

Basic residues predominate over residues 1–10; sequence MAGGKIRKEK. The tract at residues 1-23 is disordered; sequence MAGGKIRKEKPKASNRAPSNHYQ. 6 residues coordinate S-adenosyl-L-methionine: histidine 35, leucine 37, glycine 62, glutamate 83, aspartate 111, and asparagine 126. The segment at 270–313 is disordered; the sequence is ALNTTSMDLGDQSMGMEDDDNEMDDDDMEMDEGEGDGGETSEFK. Residues 285–308 show a composition bias toward acidic residues; that stretch reads MEDDDNEMDDDDMEMDEGEGDGGE.

Belongs to the class I-like SAM-binding methyltransferase superfamily. rRNA adenine N(6)-methyltransferase family. In terms of tissue distribution, expressed in rapidly dividing tissues, including root meristems and lateral root primordia, developing cotyledons and leaves, petals, anther, pollen grains and silique abscission zone.

Its subcellular location is the nucleus. It localises to the nucleolus. It carries out the reaction adenosine(1785)/adenosine(1786) in 18S rRNA + 4 S-adenosyl-L-methionine = N(6)-dimethyladenosine(1785)/N(6)-dimethyladenosine(1786) in 18S rRNA + 4 S-adenosyl-L-homocysteine + 4 H(+). Its function is as follows. N6-adenine methyltransferase which modifies the AA dinucleotide at the plant nuclear 18S rRNA nucleotides A1785 and A1786. Required for generating appropriate patterns of gene expression during root development, including the cell-specific expression of transcriptional regulators involved in root hair and non-hair cells patterning. The sequence is that of Ribosomal RNA small subunit methyltransferase from Arabidopsis thaliana (Mouse-ear cress).